Consider the following 250-residue polypeptide: Pyrroloquinoline-quinone synthase (250 aa).

This sequence belongs to the PqqC family.

The catalysed reaction is 6-(2-amino-2-carboxyethyl)-7,8-dioxo-1,2,3,4,7,8-hexahydroquinoline-2,4-dicarboxylate + 3 O2 = pyrroloquinoline quinone + 2 H2O2 + 2 H2O + H(+). Its pathway is cofactor biosynthesis; pyrroloquinoline quinone biosynthesis. In terms of biological role, ring cyclization and eight-electron oxidation of 3a-(2-amino-2-carboxyethyl)-4,5-dioxo-4,5,6,7,8,9-hexahydroquinoline-7,9-dicarboxylic-acid to PQQ. The chain is Pyrroloquinoline-quinone synthase from Xanthomonas oryzae pv. oryzae (strain PXO99A).